The primary structure comprises 385 residues: Protein pelota homolog (385 aa).

Lys-162 participates in a covalent cross-link: Glycyl lysine isopeptide (Lys-Gly) (interchain with G-Cter in SUMO2). A phosphoserine mark is found at Ser-374, Ser-380, Ser-381, and Ser-382.

Belongs to the eukaryotic release factor 1 family. Pelota subfamily. As to quaternary structure, component of the Pelota-HBS1L complex, also named Dom34-Hbs1 complex, composed of PELO and HBS1L. Interacts with PINK1. Interacts with ABCE1. Interacts with CNOT4. A divalent metal cation serves as cofactor. As to expression, ubiquitously expressed.

Its subcellular location is the cytoplasm. Its function is as follows. Component of the Pelota-HBS1L complex, a complex that recognizes stalled ribosomes and triggers the No-Go Decay (NGD) pathway. In the Pelota-HBS1L complex, PELO recognizes ribosomes stalled at the 3' end of an mRNA and engages stalled ribosomes by destabilizing mRNA in the mRNA channel. Following mRNA extraction from stalled ribosomes by the SKI complex, the Pelota-HBS1L complex promotes recruitment of ABCE1, which drives the disassembly of stalled ribosomes, followed by degradation of damaged mRNAs as part of the NGD pathway. As part of the PINK1-regulated signaling, upon mitochondrial damage is recruited to the ribosome/mRNA-ribonucleoprotein complex associated to mitochondrial outer membrane thereby enabling the recruitment of autophagy receptors and induction of mitophagy. In Homo sapiens (Human), this protein is Protein pelota homolog.